Here is a 209-residue protein sequence, read N- to C-terminus: Nucleoside triphosphate pyrophosphatase (209 aa).

Catalysis depends on Asp74, which acts as the Proton acceptor.

The protein belongs to the Maf family. Requires a divalent metal cation as cofactor.

Its subcellular location is the cytoplasm. It carries out the reaction a ribonucleoside 5'-triphosphate + H2O = a ribonucleoside 5'-phosphate + diphosphate + H(+). It catalyses the reaction a 2'-deoxyribonucleoside 5'-triphosphate + H2O = a 2'-deoxyribonucleoside 5'-phosphate + diphosphate + H(+). Functionally, nucleoside triphosphate pyrophosphatase. May have a dual role in cell division arrest and in preventing the incorporation of modified nucleotides into cellular nucleic acids. This is Nucleoside triphosphate pyrophosphatase from Neorickettsia sennetsu (strain ATCC VR-367 / Miyayama) (Ehrlichia sennetsu).